Consider the following 591-residue polypeptide: MVATSKQTTQGYVVEAYGNLLRVHFDGHVRQGEVAYVSVDDTWLKAEIIEVVGDEVKVQVFEETQGISRGALVTFSGHLLEAELGPGLLQGIFDGLQNRLEVLADTSLFLKRGEYVNAICRETVWAYTQKASVGDVLSRGDVLGTVKEGRFDHKIMVPFSCFEEVTITWVISSGDYTVDTVIAKGRTASGAELEFTMVQKWPIKQAFLEGEKVPSHEIMDVGLRVLDTQIPVLKGGTFCTPGPFGAGKTVLQHHLSKYAAVDIVVLCACGERAGEVVEILQEFPHLTDPHTGQSLMHRTCIICNTSSMPVAARESSIYLGITIAEYYRQMGLHVLLLADSTSRWAQALREISGRLEEIPGEEAFPAYLASRIAAFYERGGAVKMKDGSEGSLTICGAVSPAGGNFEEPVTQATLSVVGAFCGLSKARADARRYPSIDPMISWSKYLDSVAEILEKKVPGWGDSVKKASRFLEEGAEIGKRIEVVGEEGISMEDIEIFLKSELYDFCYLQQNAFDAEDCYCPFDRQIELFSLMSHIFSSRFCFDCPDNARSFFLELQSKIKTLNGQKFLSEDYQKGLEVIYKLLESKMVQTA.

242 to 249 (GPFGAGKT) is an ATP binding site.

The protein belongs to the ATPase alpha/beta chains family.

The catalysed reaction is ATP + H2O + 4 H(+)(in) = ADP + phosphate + 5 H(+)(out). In terms of biological role, produces ATP from ADP in the presence of a proton gradient across the membrane. The V-type alpha chain is a catalytic subunit. This Chlamydia muridarum (strain MoPn / Nigg) protein is V-type ATP synthase alpha chain (atpA).